The sequence spans 266 residues: Probable BRI1 kinase inhibitor 1 (266 aa).

Disordered regions lie at residues 1–144 and 167–242; these read MTMN…AKTR and FSRH…SEES. Over residues 9-30 the composition is skewed to pro residues; it reads RSQPPPPHPPLFKPTTPPPPPL. A compositionally biased stretch (low complexity) spans 31 to 40; that stretch reads LSTSTSTSPP. The segment covering 77–93 has biased composition (polar residues); it reads LSHNNYSSKANQHRQTG. Over residues 100 to 109 the composition is skewed to basic and acidic residues; sequence SKEKDREYKA. Composition is skewed to low complexity over residues 210 to 221 and 229 to 241; these read LSSAPASLRASP and VGGS…SSEE.

Functionally, negative regulator of brassinosteroid signaling. This chain is Probable BRI1 kinase inhibitor 1 (BKI1), found in Oryza sativa subsp. indica (Rice).